The following is a 103-amino-acid chain: MYAIIETGGKQLCVREGDTVRVEKLAVEDGAEVVFDRVLLVSTEEGLKIGRPLVLGARVTGRVQKQGRARKIIVFKYKAKKNYRRKQGHRQPYTQVVIEKIEL.

Belongs to the bacterial ribosomal protein bL21 family. In terms of assembly, part of the 50S ribosomal subunit. Contacts protein L20.

Its function is as follows. This protein binds to 23S rRNA in the presence of protein L20. This is Large ribosomal subunit protein bL21 from Desulforudis audaxviator (strain MP104C).